Here is a 509-residue protein sequence, read N- to C-terminus: Maturase K (509 aa).

This sequence belongs to the intron maturase 2 family. MatK subfamily.

Its subcellular location is the plastid. The protein localises to the chloroplast. Its function is as follows. Usually encoded in the trnK tRNA gene intron. Probably assists in splicing its own and other chloroplast group II introns. The chain is Maturase K from Banksia cuneata (Quairading banksia).